A 443-amino-acid polypeptide reads, in one-letter code: GTPase Der (443 aa).

EngA-type G domains follow at residues 3-167 (PTLV…PEPE) and 176-349 (VRVA…AAAM). Residues 9 to 16 (GRPNVGKS), 56 to 60 (DTGGF), 119 to 122 (NKAE), 182 to 189 (GRPNVGKS), 229 to 233 (DTAGM), and 294 to 297 (NKWD) contribute to the GTP site. The region spanning 350–434 (AKMTTPRLTR…PLRIQFVTAK (85 aa)) is the KH-like domain.

This sequence belongs to the TRAFAC class TrmE-Era-EngA-EngB-Septin-like GTPase superfamily. EngA (Der) GTPase family. As to quaternary structure, associates with the 50S ribosomal subunit.

Functionally, GTPase that plays an essential role in the late steps of ribosome biogenesis. The sequence is that of GTPase Der from Dechloromonas aromatica (strain RCB).